We begin with the raw amino-acid sequence, 177 residues long: UPF0114 protein jhp_0175 (177 aa).

3 helical membrane passes run 15–35 (WLLA…GYVF), 54–74 (LVLS…VLMV), and 145–165 (PIFW…LTAV).

Belongs to the UPF0114 family.

It localises to the cell membrane. The protein is UPF0114 protein jhp_0175 of Helicobacter pylori (strain J99 / ATCC 700824) (Campylobacter pylori J99).